The chain runs to 155 residues: Aspartate carbamoyltransferase regulatory chain (155 aa).

Cysteine 113, cysteine 118, cysteine 139, and cysteine 142 together coordinate Zn(2+).

This sequence belongs to the PyrI family. As to quaternary structure, contains catalytic and regulatory chains. Zn(2+) serves as cofactor.

In terms of biological role, involved in allosteric regulation of aspartate carbamoyltransferase. This chain is Aspartate carbamoyltransferase regulatory chain, found in Methanosphaerula palustris (strain ATCC BAA-1556 / DSM 19958 / E1-9c).